The chain runs to 273 residues: 2,3,4,5-tetrahydropyridine-2,6-dicarboxylate N-succinyltransferase (273 aa).

Arg104 and Asp141 together coordinate substrate.

This sequence belongs to the transferase hexapeptide repeat family. In terms of assembly, homotrimer.

The protein resides in the cytoplasm. It carries out the reaction (S)-2,3,4,5-tetrahydrodipicolinate + succinyl-CoA + H2O = (S)-2-succinylamino-6-oxoheptanedioate + CoA. It functions in the pathway amino-acid biosynthesis; L-lysine biosynthesis via DAP pathway; LL-2,6-diaminopimelate from (S)-tetrahydrodipicolinate (succinylase route): step 1/3. The polypeptide is 2,3,4,5-tetrahydropyridine-2,6-dicarboxylate N-succinyltransferase (Psychrobacter cryohalolentis (strain ATCC BAA-1226 / DSM 17306 / VKM B-2378 / K5)).